We begin with the raw amino-acid sequence, 601 residues long: Rhizobactin siderophore biosynthesis protein RhbF (601 aa).

The protein belongs to the IucA/IucC family.

It participates in siderophore biosynthesis; rhizobactin biosynthesis. The protein is Rhizobactin siderophore biosynthesis protein RhbF (rhbF) of Rhizobium meliloti (strain 1021) (Ensifer meliloti).